An 837-amino-acid polypeptide reads, in one-letter code: Protein translocase subunit SecA 1 (837 aa).

Residues Q85, 103-107, and D492 contribute to the ATP site; that span reads GEGKT. Residues 791-837 form a disordered region; that stretch reads KGEAINPAEGKPEAKRQPIRKDQHIGRNDPCPCGSGKKYKNCHGKEA. Residues 800–817 show a composition bias toward basic and acidic residues; sequence GKPEAKRQPIRKDQHIGR. Zn(2+)-binding residues include C821, C823, C832, and H833. Over residues 827-837 the composition is skewed to basic residues; the sequence is KKYKNCHGKEA.

This sequence belongs to the SecA family. In terms of assembly, monomer and homodimer. Part of the essential Sec protein translocation apparatus which comprises SecA, SecYEG and auxiliary proteins SecDF. Other proteins may also be involved. Zn(2+) serves as cofactor.

The protein resides in the cell membrane. It is found in the cytoplasm. The catalysed reaction is ATP + H2O + cellular proteinSide 1 = ADP + phosphate + cellular proteinSide 2.. Its function is as follows. Part of the Sec protein translocase complex. Interacts with the SecYEG preprotein conducting channel. Has a central role in coupling the hydrolysis of ATP to the transfer of proteins into and across the cell membrane, serving as an ATP-driven molecular motor driving the stepwise translocation of polypeptide chains across the membrane. The chain is Protein translocase subunit SecA 1 from Listeria monocytogenes serovar 1/2a (strain ATCC BAA-679 / EGD-e).